Consider the following 70-residue polypeptide: Large ribosomal subunit protein bL31 (70 aa).

Cys-16, Cys-18, Cys-38, and Cys-41 together coordinate Zn(2+).

It belongs to the bacterial ribosomal protein bL31 family. Type A subfamily. Part of the 50S ribosomal subunit. The cofactor is Zn(2+).

In terms of biological role, binds the 23S rRNA. The protein is Large ribosomal subunit protein bL31 of Saccharopolyspora erythraea (strain ATCC 11635 / DSM 40517 / JCM 4748 / NBRC 13426 / NCIMB 8594 / NRRL 2338).